The primary structure comprises 384 residues: Omega-6 fatty acid desaturase, endoplasmic reticulum (384 aa).

A disordered region spans residues 1–23 (MGAGGRMQVSPSPKKSETDTLKR). Positions 14 to 23 (KKSETDTLKR) are enriched in basic and acidic residues. A run of 2 helical transmembrane segments spans residues 56-76 (LIWD…YFPL) and 84-104 (VAWP…WVIA). The Histidine box-1 motif lies at 105 to 109 (HECGH). The chain crosses the membrane as a helical span at residues 117 to 137 (WLDDTVGLIFHSFLLVPYFSW). A Histidine box-2 motif is present at residues 141-145 (HRRHH). 3 helical membrane-spanning segments follow: residues 180–200 (VMLT…NVSG), 226–246 (IYVS…YAAA), and 253–273 (VCLY…ITYL). The Histidine box-3 motif lies at 316–320 (HVAHH).

The protein belongs to the fatty acid desaturase type 1 family.

It is found in the endoplasmic reticulum membrane. The protein operates within lipid metabolism; polyunsaturated fatty acid biosynthesis. Its function is as follows. ER (microsomal) omega-6 fatty acid desaturase introduces the second double bond in the biosynthesis of 18:3 fatty acids, important constituents of plant membranes. It is thought to use cytochrome b5 as an electron donor and to act on fatty acids esterified to phosphatidylcholine and, possibly, other phospholipids. The protein is Omega-6 fatty acid desaturase, endoplasmic reticulum of Brassica juncea (Indian mustard).